The following is a 209-amino-acid chain: Orotate phosphoribosyltransferase (209 aa).

Residues Arg96, Lys100, His102, and 122–130 (EDLISTGGS) contribute to the 5-phospho-alpha-D-ribose 1-diphosphate site. Ser126 contributes to the orotate binding site.

This sequence belongs to the purine/pyrimidine phosphoribosyltransferase family. PyrE subfamily. As to quaternary structure, homodimer. It depends on Mg(2+) as a cofactor.

The enzyme catalyses orotidine 5'-phosphate + diphosphate = orotate + 5-phospho-alpha-D-ribose 1-diphosphate. The protein operates within pyrimidine metabolism; UMP biosynthesis via de novo pathway; UMP from orotate: step 1/2. Catalyzes the transfer of a ribosyl phosphate group from 5-phosphoribose 1-diphosphate to orotate, leading to the formation of orotidine monophosphate (OMP). The protein is Orotate phosphoribosyltransferase of Streptococcus agalactiae serotype III (strain NEM316).